The primary structure comprises 701 residues: Interleukin-1 receptor accessory protein-like 1-A (701 aa).

A signal peptide spans 1 to 19; that stretch reads MTALNPVLFLLCGVSVSLS. The Extracellular portion of the chain corresponds to 20–361; that stretch reads LKVVSKRGSV…IGKRVELMYT (342 aa). The 101-residue stretch at 33 to 133 folds into the Ig-like C2-type 1 domain; sequence TDWSVDYLKY…RNSTFCMKVS (101 aa). C54 and C121 are disulfide-bonded. Residues N64, N125, N141, N216, N267, and N334 are each glycosylated (N-linked (GlcNAc...) asparagine). Ig-like C2-type domains follow at residues 146–235 and 245–353; these read CYNS…TYLS and PRIL…VQIG. Cysteines 167 and 219 form a disulfide. A disulfide bridge connects residues C270 and C337. A helical transmembrane segment spans residues 362–382; that stretch reads VELAGGLGAILLLLALLLSVY. Over 383 to 701 the chain is Cytoplasmic; that stretch reads KCYRIELLLC…RETSISSVIW (319 aa). The TIR domain maps to 407–563; that stretch reads KEYDAYLSYS…RFWKQLRYTM (157 aa). E495 is a catalytic residue. A required for synaptic vesicle accumulation during synaptogenesis region spans residues 568–701; sequence PQQTITNHAL…RETSISSVIW (134 aa).

This sequence belongs to the interleukin-1 receptor family.

The protein localises to the cell membrane. Its subcellular location is the cytoplasm. The catalysed reaction is NAD(+) + H2O = ADP-D-ribose + nicotinamide + H(+). May regulate secretion and presynaptic differentiation through inhibition of the activity of N-type voltage-gated calcium channel. During presynaptic differentiation may regulate both synaptic vesicle accumulation in axon terminals and subsequent axon terminal remodeling. This Danio rerio (Zebrafish) protein is Interleukin-1 receptor accessory protein-like 1-A (il1rapl1a).